The primary structure comprises 421 residues: Aspartokinase (421 aa).

7 to 10 is a binding site for ATP; that stretch reads KYGG. 25–30 lines the substrate pocket; that stretch reads RIVATK. Position 41 (serine 41) interacts with ATP. Residues 45-49, glutamate 74, 125-126, 151-154, and serine 154 contribute to the substrate site; these read DTTDE, LD, and RGGS. Residues 174–175, 180–185, and lysine 210 contribute to the ATP site; these read SD and YTADPR. ACT domains are found at residues 267 to 343 and 349 to 421; these read VTVL…YDDQ and LVGA…GTGR. Substrate-binding positions include aspartate 274, 274–279, 292–294, glutamine 298, 360–361, 374–375, and 381–382; these read DKPGEA, NID, VT, NV, and SE.

It belongs to the aspartokinase family. In terms of assembly, tetramer consisting of 2 isoforms Alpha (catalytic and regulation) and of a homodimer of 2 isoforms Beta (regulation).

The catalysed reaction is L-aspartate + ATP = 4-phospho-L-aspartate + ADP. It participates in amino-acid biosynthesis; L-lysine biosynthesis via DAP pathway; (S)-tetrahydrodipicolinate from L-aspartate: step 1/4. The protein operates within amino-acid biosynthesis; L-methionine biosynthesis via de novo pathway; L-homoserine from L-aspartate: step 1/3. Its pathway is amino-acid biosynthesis; L-threonine biosynthesis; L-threonine from L-aspartate: step 1/5. In terms of biological role, catalyzes the phosphorylation of the beta-carboxyl group of aspartic acid with ATP to yield 4-phospho-L-aspartate, which is involved in the branched biosynthetic pathway leading to the biosynthesis of amino acids lysine, threonine, isoleucine and methionine. This is Aspartokinase (lysC) from Corynebacterium efficiens (strain DSM 44549 / YS-314 / AJ 12310 / JCM 11189 / NBRC 100395).